The sequence spans 235 residues: 2-C-methyl-D-erythritol 4-phosphate cytidylyltransferase (235 aa).

This sequence belongs to the IspD/TarI cytidylyltransferase family. IspD subfamily.

The enzyme catalyses 2-C-methyl-D-erythritol 4-phosphate + CTP + H(+) = 4-CDP-2-C-methyl-D-erythritol + diphosphate. Its pathway is isoprenoid biosynthesis; isopentenyl diphosphate biosynthesis via DXP pathway; isopentenyl diphosphate from 1-deoxy-D-xylulose 5-phosphate: step 2/6. Functionally, catalyzes the formation of 4-diphosphocytidyl-2-C-methyl-D-erythritol from CTP and 2-C-methyl-D-erythritol 4-phosphate (MEP). This is 2-C-methyl-D-erythritol 4-phosphate cytidylyltransferase from Pseudomonas fluorescens (strain SBW25).